The sequence spans 352 residues: C-C chemokine receptor type 5 (352 aa).

At 1–30 the chain is on the extracellular side; sequence MDYQVSSPTYDIDYYTSEPCQKINVKQIAA. At tyrosine 3 the chain carries Sulfotyrosine. O-linked (GalNAc...) serine glycosylation is found at serine 6 and serine 7. Tyrosine 10, tyrosine 14, and tyrosine 15 each carry sulfotyrosine. Intrachain disulfides connect cysteine 20–cysteine 269 and cysteine 101–cysteine 178. A helical transmembrane segment spans residues 31–58; that stretch reads RLLPPLYSLVFIFGFVGNILVVLILINC. Residues 59 to 68 are Cytoplasmic-facing; it reads KRLKSMTDIY. The chain crosses the membrane as a helical span at residues 69–89; the sequence is LLNLAISDLLFLLTVPFWAHY. At 90-102 the chain is on the extracellular side; it reads AAAQWDFGNTMCQ. A helical membrane pass occupies residues 103-124; that stretch reads LLTGLYFIGFFSGIFFIILLTI. Over 125 to 141 the chain is Cytoplasmic; the sequence is DRYLAIVHAVFALKART. Residues 142–166 traverse the membrane as a helical segment; the sequence is VTFGVVTSVITWVVAVFASLPGIIF. Over 167–198 the chain is Extracellular; the sequence is TRSQREGLHYTCSSHFPYSQYQFWKNFQTLKM. Residues 199-218 traverse the membrane as a helical segment; that stretch reads VILGLVLPLLVMVICYSGIL. Residues 219-235 are Cytoplasmic-facing; sequence KTLLRCRNEKKRHRAVR. A helical membrane pass occupies residues 236–260; that stretch reads LIFTIMIVYFLFWAPYNIVLLLNTF. The Extracellular segment spans residues 261–277; it reads QEFFGLNNCSSSNRLDQ. The chain crosses the membrane as a helical span at residues 278–301; sequence AMQVTETLGMTHCCINPIIYAFVG. The Cytoplasmic portion of the chain corresponds to 302–352; that stretch reads EKFRNYLLVFFQKHIAKRFCKCCSIFQQEAPERASSVYTRSTGEQEISVGL. Residues cysteine 321, cysteine 323, and cysteine 324 are each lipidated (S-palmitoyl cysteine). Serine 336, serine 337, serine 342, and serine 349 each carry phosphoserine; by BARK1.

This sequence belongs to the G-protein coupled receptor 1 family. Interacts with PRAF2. Efficient ligand binding to CCL3/MIP-1alpha and CCL4/MIP-1beta requires sulfation, O-glycosylation and sialic acid modifications. Glycosylation on Ser-6 is required for efficient binding of CCL4. Interacts with GRK2. Interacts with ARRB1 and ARRB2. Interacts with CNIH4. Interacts with S100A4; this interaction stimulates T-lymphocyte chemotaxis. Post-translationally, sulfated on at least 2 of the N-terminal tyrosines. Sulfation is required for efficient binding of the chemokines, CCL3 and CCL4. Palmitoylation in the C-terminal is important for cell surface expression. In terms of processing, phosphorylation on serine residues in the C-terminal is stimulated by binding CC chemokines especially by APO-RANTES. Post-translationally, O-glycosylated, but not N-glycosylated. Ser-6 appears to be the major site even if Ser-7 may be also O-glycosylated. Also sialylated glycans present which contribute to chemokine binding. Thr-16 and Ser-17 may also be glycosylated and, if so, with small moieties such as a T-antigen.

It localises to the cell membrane. Receptor for a number of inflammatory CC-chemokines including CCL3/MIP-1-alpha, CCL4/MIP-1-beta and RANTES and subsequently transduces a signal by increasing the intracellular calcium ion level. May play a role in the control of granulocytic lineage proliferation or differentiation. Participates in T-lymphocyte migration to the infection site by acting as a chemotactic receptor. This Macaca fascicularis (Crab-eating macaque) protein is C-C chemokine receptor type 5 (CCR5).